A 99-amino-acid chain; its full sequence is Aspartyl/glutamyl-tRNA(Asn/Gln) amidotransferase subunit C (99 aa).

It belongs to the GatC family. As to quaternary structure, heterotrimer of A, B and C subunits.

The enzyme catalyses L-glutamyl-tRNA(Gln) + L-glutamine + ATP + H2O = L-glutaminyl-tRNA(Gln) + L-glutamate + ADP + phosphate + H(+). It catalyses the reaction L-aspartyl-tRNA(Asn) + L-glutamine + ATP + H2O = L-asparaginyl-tRNA(Asn) + L-glutamate + ADP + phosphate + 2 H(+). Its function is as follows. Allows the formation of correctly charged Asn-tRNA(Asn) or Gln-tRNA(Gln) through the transamidation of misacylated Asp-tRNA(Asn) or Glu-tRNA(Gln) in organisms which lack either or both of asparaginyl-tRNA or glutaminyl-tRNA synthetases. The reaction takes place in the presence of glutamine and ATP through an activated phospho-Asp-tRNA(Asn) or phospho-Glu-tRNA(Gln). The chain is Aspartyl/glutamyl-tRNA(Asn/Gln) amidotransferase subunit C from Cupriavidus taiwanensis (strain DSM 17343 / BCRC 17206 / CCUG 44338 / CIP 107171 / LMG 19424 / R1) (Ralstonia taiwanensis (strain LMG 19424)).